The primary structure comprises 367 residues: Innexin inx4 (367 aa).

Residues 1-21 (MYAAVKPLSKYLQFKSVHIYD) are Cytoplasmic-facing. The chain crosses the membrane as a helical span at residues 22 to 42 (AIFTLHSKVTVALLLACTFLL). The Extracellular portion of the chain corresponds to 43–110 (SSKQYFGDPI…PENRNYITYY (68 aa)). A helical membrane pass occupies residues 111–131 (QWVVLVLLLESFVFYMPAFLW). Topologically, residues 132-186 (KIWEGGRLKHLCDDFHKMAVCKDKSRTHLRVLVNYFSSDYKETHFRYFVSYVFCE) are cytoplasmic. Residues 187-207 (ILNLSISILNFLLLDVFFGGF) form a helical membrane-spanning segment. Over 208–268 (WGRYRNALLS…LLPLNILNEK (61 aa)) the chain is Extracellular. Residues 269 to 289 (IFAFLWIWFILVAMLISLKFL) traverse the membrane as a helical segment. Residues 290 to 367 (YRLATVLYPG…IKIPPGADKI (78 aa)) lie on the Cytoplasmic side of the membrane.

It belongs to the pannexin family. In terms of tissue distribution, expressed in nurse cells and oocyte during oogenesis. Uniform expression in imaginal wing disk and low expression in developing imaginal CNS. Expressed in embryonic pole cells and primordial germ cells.

Its subcellular location is the cell membrane. The protein localises to the cell junction. It localises to the gap junction. Its function is as follows. Structural component of the gap junctions in germline cells. Required for differentiation and survival of germline cysts in females and of spermatogonia in males; gap junctional communication between spermatogonia and somatic cyst cells may be required for normal differentiation and survival of spermatogonia. This is Innexin inx4 (zpg) from Drosophila melanogaster (Fruit fly).